The sequence spans 242 residues: Glucosamine-6-phosphate deaminase (242 aa).

Aspartate 67 (proton acceptor; for enolization step) is an active-site residue. Asparagine 136 functions as the For ring-opening step in the catalytic mechanism. Histidine 138 (proton acceptor; for ring-opening step) is an active-site residue. Catalysis depends on glutamate 143, which acts as the For ring-opening step.

It belongs to the glucosamine/galactosamine-6-phosphate isomerase family. NagB subfamily.

It carries out the reaction alpha-D-glucosamine 6-phosphate + H2O = beta-D-fructose 6-phosphate + NH4(+). It participates in amino-sugar metabolism; N-acetylneuraminate degradation; D-fructose 6-phosphate from N-acetylneuraminate: step 5/5. Its function is as follows. Catalyzes the reversible isomerization-deamination of glucosamine 6-phosphate (GlcN6P) to form fructose 6-phosphate (Fru6P) and ammonium ion. The sequence is that of Glucosamine-6-phosphate deaminase from Clostridium perfringens (strain ATCC 13124 / DSM 756 / JCM 1290 / NCIMB 6125 / NCTC 8237 / Type A).